Here is a 475-residue protein sequence, read N- to C-terminus: BICD family-like cargo adapter 2 (475 aa).

Residues 56–275 adopt a coiled-coil conformation; sequence ELGKALLERN…LKELQDELHM (220 aa). 2 stretches are compositionally biased toward polar residues: residues 286-300 and 308-318; these read HSSL…TAVQ and SAETQSITSGY. Residues 286–318 are disordered; sequence HSSLHSEIQQSTAVQNHEKGRNSAETQSITSGY. Positions 340–413 form a coiled coil; sequence RLQDQVTMQH…ESLNLQLLST (74 aa). The segment covering 440-450 has biased composition (low complexity); that stretch reads QSQKQQETQKP. Residues 440-459 form a disordered region; sequence QSQKQQETQKPPESPQNSFL.

Belongs to the BICDR family.

This Xenopus tropicalis (Western clawed frog) protein is BICD family-like cargo adapter 2 (bicdl2).